Reading from the N-terminus, the 122-residue chain is Large ribosomal subunit protein uL18 (122 aa).

Belongs to the universal ribosomal protein uL18 family. Part of the 50S ribosomal subunit; part of the 5S rRNA/L5/L18/L25 subcomplex. Contacts the 5S and 23S rRNAs.

This is one of the proteins that bind and probably mediate the attachment of the 5S RNA into the large ribosomal subunit, where it forms part of the central protuberance. The sequence is that of Large ribosomal subunit protein uL18 from Leptospira interrogans serogroup Icterohaemorrhagiae serovar copenhageni (strain Fiocruz L1-130).